The following is a 200-amino-acid chain: Ankyrin repeat-containing protein YAR1 (200 aa).

ANK repeat units follow at residues 49-78 and 92-121; these read SDST…RANS and TGNT…ADPF. Phosphoserine is present on Ser-78. A disordered region spans residues 152–173; the sequence is VEPEDDEEDTQTEGKNSVQITK. A compositionally biased stretch (acidic residues) spans 153–162; it reads EPEDDEEDTQ. Polar residues predominate over residues 164–173; it reads EGKNSVQITK.

In terms of biological role, required for normal rate of cell proliferation. The polypeptide is Ankyrin repeat-containing protein YAR1 (YAR1) (Saccharomyces cerevisiae (strain ATCC 204508 / S288c) (Baker's yeast)).